A 74-amino-acid polypeptide reads, in one-letter code: UPF0352 protein HAPS_0210 (74 aa).

It belongs to the UPF0352 family.

This is UPF0352 protein HAPS_0210 from Glaesserella parasuis serovar 5 (strain SH0165) (Haemophilus parasuis).